A 148-amino-acid chain; its full sequence is Large ribosomal subunit protein uL15 (148 aa).

A compositionally biased stretch (basic residues) spans 1–30; it reads MPSRLRKTRKLRGHVSHGHGRIGKHRKHPG. The tract at residues 1 to 37 is disordered; that stretch reads MPSRLRKTRKLRGHVSHGHGRIGKHRKHPGGRGNAGG. His39 is subject to (3S)-3-hydroxyhistidine. N6-acetyllysine is present on residues Lys47 and Lys55. Phosphoserine is present on Ser68. Lys110 carries the N6-acetyllysine modification.

Belongs to the universal ribosomal protein uL15 family. As to quaternary structure, component of the large ribosomal subunit. In terms of processing, hydroxylated on His-39 by MINA.

The protein localises to the cytoplasm. Component of the large ribosomal subunit. The ribosome is a large ribonucleoprotein complex responsible for the synthesis of proteins in the cell. The sequence is that of Large ribosomal subunit protein uL15 (Rpl27a) from Rattus norvegicus (Rat).